A 1403-amino-acid polypeptide reads, in one-letter code: Centrosomal protein of 162 kDa (1403 aa).

Residues 19 to 44 (ELSDDSFENSNETPSQPNKDRKKKDT) form a disordered region. Positions 26–35 (ENSNETPSQP) are enriched in polar residues. Phosphoserine is present on residues serine 156 and serine 159. 3 disordered regions span residues 171–235 (NVEP…EKTG), 305–342 (DTGEPRIEASPGHSVRSSAKDGLQENEESSKNISTTES), and 449–586 (NPSL…SDDS). Over residues 176-189 (EGGRENESEHKELP) the composition is skewed to basic and acidic residues. Residues 192-204 (YSDDFEDAEDTDE) are compositionally biased toward acidic residues. Over residues 206–220 (LITKDEETRPKENPE) the composition is skewed to basic and acidic residues. Residues 449–466 (NPSLLPQDNKANQTSRSR) show a composition bias toward polar residues. Serine 468 carries the post-translational modification Phosphoserine. Basic residues predominate over residues 481–496 (PCKKARSAPPLPRRKP). A compositionally biased stretch (polar residues) spans 504 to 517 (ARSSGYSKPSSPLQ). Composition is skewed to basic and acidic residues over residues 522 to 532 (LEKKTSKDNTK) and 567 to 581 (PHREGSPATPKRPED). Coiled-coil stretches lie at residues 610 to 1120 (KRAQ…MLSR), 1170 to 1205 (EVLEENYRLRSELEGLTLEREKLKMESEAAVCQLES), and 1234 to 1385 (CQNA…LHRQ).

The protein belongs to the CEP162 family. As to quaternary structure, interacts with alpha-tubulin. Interacts with CPNE4. Interacts with CEP290.

It localises to the cytoplasm. Its subcellular location is the cytoskeleton. The protein resides in the microtubule organizing center. It is found in the centrosome. The protein localises to the centriole. It localises to the spindle. Its subcellular location is the nucleus. Required to promote assembly of the transition zone in primary cilia. Acts by specifically recognizing and binding the axonemal microtubule. Localizes to the distal ends of centrioles before ciliogenesis and directly binds to axonemal microtubule, thereby promoting and restricting transition zone formation specifically at the cilia base. Required to mediate CEP290 association with microtubules. In Rattus norvegicus (Rat), this protein is Centrosomal protein of 162 kDa (Cep162).